A 413-amino-acid chain; its full sequence is Protein esc1 (413 aa).

A compositionally biased stretch (polar residues) spans 1–22 (MSSYALPSMQPTPTSSIPLRQM). 2 disordered regions span residues 1 to 202 (MSSY…NQPS) and 230 to 265 (MYVP…YSQG). Residues 23-42 (SQPTTSAPSNSASSTPYSPQ) are compositionally biased toward low complexity. Positions 43–63 (QVPLTHNSYPLSTPSSFQHGQ) are enriched in polar residues. 2 stretches are compositionally biased toward low complexity: residues 86-103 (SAAP…STAA) and 116-126 (SSSSYVYSVPP). Polar residues predominate over residues 127-136 (TNSTTSQASA). Residues 150-197 (STTLTPSTTDSSSTDVSSSDSVSTSASSSNASNTVSVTSPASSSATPL) are compositionally biased toward low complexity. The 52-residue stretch at 334–385 (ELRTSHKLAERKRRKEIKELFDDLKDALPLDKSTKSSKWGLLTRAIQYIEQL) folds into the bHLH domain.

Efficient DNA binding requires dimerization with another bHLH protein.

It is found in the nucleus. In terms of biological role, involved in the sexual differentiation process. Modulate the ability of the cell to differentiate in response to the nitrogen starvation signal; in particular in response to decreases in the level of cellular cAMP. In Schizosaccharomyces pombe (strain 972 / ATCC 24843) (Fission yeast), this protein is Protein esc1 (esc1).